Reading from the N-terminus, the 112-residue chain is Cornifelin homolog (112 aa).

The protein belongs to the cornifelin family.

This is Cornifelin homolog (cnfn) from Danio rerio (Zebrafish).